Here is a 293-residue protein sequence, read N- to C-terminus: Proline iminopeptidase (293 aa).

One can recognise an AB hydrolase-1 domain in the interval 28 to 277 (KPLVLLHGGP…YSRHMPFVEE (250 aa)). S104 acts as the Nucleophile in catalysis. D244 is a catalytic residue. Catalysis depends on H271, which acts as the Proton donor.

This sequence belongs to the peptidase S33 family.

The catalysed reaction is Release of N-terminal proline from a peptide.. Functionally, releases the N-terminal proline from various substrates. This Clostridioides difficile (strain 630) (Peptoclostridium difficile) protein is Proline iminopeptidase.